Consider the following 84-residue polypeptide: Hirudin-HM2 (84 aa).

An N-terminal signal peptide occupies residues 1-20 (MFSLKLFVVFLAVCICVSQA). The segment at 21–23 (VSY) is interaction with thrombin active site. Intrachain disulfides connect Cys26/Cys34, Cys36/Cys48, and Cys42/Cys57. The interval 53–84 (SGNQCVHGEGTPKPKSQTEGDFEEIPDEDILN) is disordered. O-linked (GalNAc...) threonine glycosylation is present at Thr63. A compositionally biased stretch (acidic residues) spans 72–84 (GDFEEIPDEDILN). An interaction with fibrinogen-binding exosite of thrombin region spans residues 73-84 (DFEEIPDEDILN).

Belongs to the protease inhibitor I14 (hirudin) family.

It is found in the secreted. Functionally, hirudin is a potent thrombin-specific protease inhibitor. It forms a stable non-covalent complex with alpha-thrombin, thereby abolishing its ability to cleave fibrinogen. This Hirudinaria manillensis (Asian medical leech) protein is Hirudin-HM2.